A 247-amino-acid polypeptide reads, in one-letter code: Triosephosphate isomerase (247 aa).

9–11 provides a ligand contact to substrate; that stretch reads NWK. Residue H94 is the Electrophile of the active site. E165 functions as the Proton acceptor in the catalytic mechanism. Substrate is bound by residues G171, S209, and 230-231; that span reads GG.

The protein belongs to the triosephosphate isomerase family. In terms of assembly, homodimer.

It localises to the cytoplasm. The catalysed reaction is D-glyceraldehyde 3-phosphate = dihydroxyacetone phosphate. It participates in carbohydrate biosynthesis; gluconeogenesis. Its pathway is carbohydrate degradation; glycolysis; D-glyceraldehyde 3-phosphate from glycerone phosphate: step 1/1. Functionally, involved in the gluconeogenesis. Catalyzes stereospecifically the conversion of dihydroxyacetone phosphate (DHAP) to D-glyceraldehyde-3-phosphate (G3P). In Albidiferax ferrireducens (strain ATCC BAA-621 / DSM 15236 / T118) (Rhodoferax ferrireducens), this protein is Triosephosphate isomerase.